We begin with the raw amino-acid sequence, 215 residues long: Cytochrome c biogenesis ATP-binding export protein CcmA (215 aa).

In terms of domain architecture, ABC transporter spans L3 to A215. Position 35–42 (G35–S42) interacts with ATP.

It belongs to the ABC transporter superfamily. CcmA exporter (TC 3.A.1.107) family. The complex is composed of two ATP-binding proteins (CcmA) and two transmembrane proteins (CcmB).

The protein localises to the cell inner membrane. It carries out the reaction heme b(in) + ATP + H2O = heme b(out) + ADP + phosphate + H(+). Functionally, part of the ABC transporter complex CcmAB involved in the biogenesis of c-type cytochromes; once thought to export heme, this seems not to be the case, but its exact role is uncertain. Responsible for energy coupling to the transport system. This is Cytochrome c biogenesis ATP-binding export protein CcmA from Brucella abortus (strain 2308).